A 626-amino-acid chain; its full sequence is ATP-dependent zinc metalloprotease FtsH (626 aa).

Topologically, residues Met1 to Asn7 are cytoplasmic. The helical transmembrane segment at Tyr8–Phe28 threads the bilayer. Over Tyr29–Ser108 the chain is Periplasmic. The helical transmembrane segment at Phe109 to Phe129 threads the bilayer. At Met130–Ser626 the chain is on the cytoplasmic side. Gly202–Thr209 contributes to the ATP binding site. His424 serves as a coordination point for Zn(2+). Residue Glu425 is part of the active site. Residues His428 and Asp501 each contribute to the Zn(2+) site.

The protein in the central section; belongs to the AAA ATPase family. It in the C-terminal section; belongs to the peptidase M41 family. Homohexamer. The cofactor is Zn(2+).

It is found in the cell inner membrane. Its function is as follows. Acts as a processive, ATP-dependent zinc metallopeptidase for both cytoplasmic and membrane proteins. Plays a role in the quality control of integral membrane proteins. This is ATP-dependent zinc metalloprotease FtsH from Pseudothermotoga lettingae (strain ATCC BAA-301 / DSM 14385 / NBRC 107922 / TMO) (Thermotoga lettingae).